The chain runs to 241 residues: Chaperone protein HifB (241 aa).

Positions 1–27 are cleaved as a signal peptide; sequence MGKTMFKKTLLFFTALFFTALCAFSAN.

Belongs to the periplasmic pilus chaperone family.

Its subcellular location is the periplasm. Mediates assembly of pili by forming soluble multimeric complexes with pili subunits as an intermediate step in the assembly process. This protein is involved in type B pili (HifA) assembly. The chain is Chaperone protein HifB (hifB) from Haemophilus influenzae.